The following is a 260-amino-acid chain: 3'-5' ssDNA/RNA exonuclease TatD (260 aa).

A divalent metal cation contacts are provided by Glu92, His128, and His153.

This sequence belongs to the metallo-dependent hydrolases superfamily. TatD-type hydrolase family. TatD subfamily. As to quaternary structure, monomer. Mg(2+) serves as cofactor.

Its subcellular location is the cytoplasm. Functionally, 3'-5' exonuclease that prefers single-stranded DNA and RNA. May play a role in the H(2)O(2)-induced DNA damage repair. This chain is 3'-5' ssDNA/RNA exonuclease TatD, found in Edwardsiella piscicida.